A 426-amino-acid chain; its full sequence is Histidine--tRNA ligase (426 aa).

The protein belongs to the class-II aminoacyl-tRNA synthetase family. In terms of assembly, homodimer.

Its subcellular location is the cytoplasm. It carries out the reaction tRNA(His) + L-histidine + ATP = L-histidyl-tRNA(His) + AMP + diphosphate + H(+). The protein is Histidine--tRNA ligase of Geobacillus kaustophilus (strain HTA426).